Reading from the N-terminus, the 202-residue chain is Small ribosomal subunit protein uS4c (202 aa).

An S4 RNA-binding domain is found at 90–158; that stretch reads MRSDNVIFRL…ISKNIELYQK (69 aa).

The protein belongs to the universal ribosomal protein uS4 family. Part of the 30S ribosomal subunit. Contacts protein S5. The interaction surface between S4 and S5 is involved in control of translational fidelity.

It localises to the plastid. The protein resides in the chloroplast. In terms of biological role, one of the primary rRNA binding proteins, it binds directly to 16S rRNA where it nucleates assembly of the body of the 30S subunit. With S5 and S12 plays an important role in translational accuracy. The chain is Small ribosomal subunit protein uS4c (rps4) from Anthoceros punctatus (Hornwort).